A 515-amino-acid chain; its full sequence is Bifunctional purine biosynthesis protein PurH (515 aa).

The region spanning 1–145 (MTKRVLISVS…KNHASVTVVV (145 aa)) is the MGS-like domain.

The protein belongs to the PurH family.

It carries out the reaction (6R)-10-formyltetrahydrofolate + 5-amino-1-(5-phospho-beta-D-ribosyl)imidazole-4-carboxamide = 5-formamido-1-(5-phospho-D-ribosyl)imidazole-4-carboxamide + (6S)-5,6,7,8-tetrahydrofolate. It catalyses the reaction IMP + H2O = 5-formamido-1-(5-phospho-D-ribosyl)imidazole-4-carboxamide. Its pathway is purine metabolism; IMP biosynthesis via de novo pathway; 5-formamido-1-(5-phospho-D-ribosyl)imidazole-4-carboxamide from 5-amino-1-(5-phospho-D-ribosyl)imidazole-4-carboxamide (10-formyl THF route): step 1/1. It functions in the pathway purine metabolism; IMP biosynthesis via de novo pathway; IMP from 5-formamido-1-(5-phospho-D-ribosyl)imidazole-4-carboxamide: step 1/1. This chain is Bifunctional purine biosynthesis protein PurH, found in Streptococcus pneumoniae (strain P1031).